The primary structure comprises 200 residues: GTP cyclohydrolase 1 (200 aa).

3 residues coordinate Zn(2+): Cys87, His90, and Cys158.

This sequence belongs to the GTP cyclohydrolase I family. As to quaternary structure, toroid-shaped homodecamer, composed of two pentamers of five dimers.

It carries out the reaction GTP + H2O = 7,8-dihydroneopterin 3'-triphosphate + formate + H(+). It functions in the pathway cofactor biosynthesis; 7,8-dihydroneopterin triphosphate biosynthesis; 7,8-dihydroneopterin triphosphate from GTP: step 1/1. The sequence is that of GTP cyclohydrolase 1 from Xanthomonas campestris pv. campestris (strain ATCC 33913 / DSM 3586 / NCPPB 528 / LMG 568 / P 25).